Consider the following 244-residue polypeptide: Orotidine 5'-phosphate decarboxylase (244 aa).

Residues aspartate 20, lysine 42, 70–79, threonine 125, arginine 186, glutamine 195, glycine 215, and arginine 216 contribute to the substrate site; that span reads DLKFFDIPAT. Catalysis depends on lysine 72, which acts as the Proton donor.

The protein belongs to the OMP decarboxylase family. Type 1 subfamily. Homodimer.

It carries out the reaction orotidine 5'-phosphate + H(+) = UMP + CO2. The protein operates within pyrimidine metabolism; UMP biosynthesis via de novo pathway; UMP from orotate: step 2/2. Its function is as follows. Catalyzes the decarboxylation of orotidine 5'-monophosphate (OMP) to uridine 5'-monophosphate (UMP). The polypeptide is Orotidine 5'-phosphate decarboxylase (Xylella fastidiosa (strain M12)).